Consider the following 258-residue polypeptide: Phosphate import ATP-binding protein PstB 2 (258 aa).

The region spanning 12 to 253 (IQVRDLNFYY…PQQKQTEDYI (242 aa)) is the ABC transporter domain. 44-51 (GPSGCGKS) lines the ATP pocket.

This sequence belongs to the ABC transporter superfamily. Phosphate importer (TC 3.A.1.7) family. In terms of assembly, the complex is composed of two ATP-binding proteins (PstB), two transmembrane proteins (PstC and PstA) and a solute-binding protein (PstS).

Its subcellular location is the cell inner membrane. It catalyses the reaction phosphate(out) + ATP + H2O = ADP + 2 phosphate(in) + H(+). Its function is as follows. Part of the ABC transporter complex PstSACB involved in phosphate import. Responsible for energy coupling to the transport system. The protein is Phosphate import ATP-binding protein PstB 2 of Yersinia pestis bv. Antiqua (strain Nepal516).